The sequence spans 192 residues: Large ribosomal subunit protein uL24c (192 aa).

A chloroplast-targeting transit peptide spans 1-47; it reads MAAMAALQSSFTSLSLSSNSFLGQRLFPSPTTLQVKTEGHSPCLIVM.

Component of the chloroplast large ribosomal subunit (LSU). Mature 70S chloroplast ribosomes of higher plants consist of a small (30S) and a large (50S) subunit. The 30S small subunit contains 1 molecule of ribosomal RNA (16S rRNA) and 24 different proteins. The 50S large subunit contains 3 rRNA molecules (23S, 5S and 4.5S rRNA) and 33 different proteins.

The protein resides in the plastid. It localises to the chloroplast. Functionally, component of the chloroplast ribosome (chloro-ribosome), a dedicated translation machinery responsible for the synthesis of chloroplast genome-encoded proteins, including proteins of the transcription and translation machinery and components of the photosynthetic apparatus. This Spinacia oleracea (Spinach) protein is Large ribosomal subunit protein uL24c (RPL24).